We begin with the raw amino-acid sequence, 475 residues long: Ribulose bisphosphate carboxylase large chain (475 aa).

The propeptide occupies 1–2 (MS). Pro-3 carries the N-acetylproline modification. The residue at position 14 (Lys-14) is an N6,N6,N6-trimethyllysine. Substrate is bound by residues Asn-123 and Thr-173. The active-site Proton acceptor is Lys-175. Residue Lys-177 participates in substrate binding. Mg(2+)-binding residues include Lys-201, Asp-203, and Glu-204. Lys-201 carries the post-translational modification N6-carboxylysine. Residue His-294 is the Proton acceptor of the active site. Substrate is bound by residues Arg-295, His-327, and Ser-379.

It belongs to the RuBisCO large chain family. Type I subfamily. As to quaternary structure, heterohexadecamer of 8 large chains and 8 small chains; disulfide-linked. The disulfide link is formed within the large subunit homodimers. Mg(2+) serves as cofactor. The disulfide bond which can form in the large chain dimeric partners within the hexadecamer appears to be associated with oxidative stress and protein turnover.

The protein localises to the plastid. The protein resides in the chloroplast. The catalysed reaction is 2 (2R)-3-phosphoglycerate + 2 H(+) = D-ribulose 1,5-bisphosphate + CO2 + H2O. It catalyses the reaction D-ribulose 1,5-bisphosphate + O2 = 2-phosphoglycolate + (2R)-3-phosphoglycerate + 2 H(+). In terms of biological role, ruBisCO catalyzes two reactions: the carboxylation of D-ribulose 1,5-bisphosphate, the primary event in carbon dioxide fixation, as well as the oxidative fragmentation of the pentose substrate in the photorespiration process. Both reactions occur simultaneously and in competition at the same active site. The chain is Ribulose bisphosphate carboxylase large chain from Populus trichocarpa (Western balsam poplar).